Reading from the N-terminus, the 926-residue chain is Piwi-like protein Ago3 (926 aa).

The interval 1-62 is disordered; it reads MADPGKGRGR…PSTSGVSIGG (62 aa). The segment covering 26–56 has biased composition (low complexity); it reads SPSQSESQSPESTPEQSTAPSTIASATPSTS. One can recognise a PAZ domain in the interval 339–455; that stretch reads TVLSLIKEVV…LIPELCQLTG (117 aa). Positions 620-912 constitute a Piwi domain; that stretch reads LVVAICSTKR…LSYLVGQCVH (293 aa). Glutamine 672 provides a ligand contact to Mg(2+). Active-site residues include aspartate 697, glutamate 735, aspartate 767, and histidine 901. Leucine 926 is a Mg(2+) binding site.

The protein belongs to the argonaute family. Piwi subfamily. As to quaternary structure, interacts (when symmetrically methylated) with Papi/TDRKH. Interacts with Vasa. Mg(2+) is required as a cofactor. Arginine methylation is required for the interaction with Tudor domain-containing protein Papi/TDRKH. In terms of tissue distribution, highly expressed in the larval testis, pupal ovary and adult eggs.

Its subcellular location is the cytoplasm. Its function is as follows. Endoribonuclease that plays a central role during spermatogenesis by repressing transposable elements and preventing their mobilization, which is essential for the germline integrity. Plays an essential role in meiotic differentiation of spermatocytes, germ cell differentiation and in self-renewal of spermatogonial stem cells. Its presence in oocytes suggests that it may participate in similar functions during oogenesis in females. Acts via the piRNA metabolic process, which mediates the repression of transposable elements during meiosis by forming complexes composed of piRNAs and Piwi proteins and govern the methylation and subsequent repression of transposons. Directly binds piRNAs, a class of 24 to 30 nucleotide RNAs that are generated by a Dicer-independent mechanism and are primarily derived from transposons and other repeated sequence elements. Strongly prefers a have adenine at position 10 of their guide (g10A preference). Plays a key role in the piRNA amplification loop, also named ping-pong amplification cycle: antisense piRNA-bound Siwi and sense piRNA-bound Ago3 reciprocally cleave complementary transcripts, to couple the amplification of piRNAs with the repression of transposable elements. This Bombyx mori (Silk moth) protein is Piwi-like protein Ago3 (AGO3).